Consider the following 673-residue polypeptide: uncharacterized protein (673 aa).

Residues 1-208 are Cytoplasmic-facing; sequence MSTHSNDYFS…STGQLELPPD (208 aa). Phosphoserine is present on residues Ser-57, Ser-112, and Ser-172. A helical membrane pass occupies residues 209 to 229; the sequence is GGYGWVVTFCVFLTMFSTWGC. Residue Asn-230 is glycosylated (N-linked (GlcNAc...) asparagine). Over 230–255 the chain is Lumenal; that stretch reads NASFGVDLAYYLNHDTYPGASKYDYA. Residues 256-276 traverse the membrane as a helical segment; that stretch reads LIAGLTVFLGQLLSPLVMALM. Arg-277 is a topological domain (cytoplasmic). Residues 278–298 traverse the membrane as a helical segment; the sequence is IIGLRTTMLFGDAVMLAAYLL. Residues 299 to 315 are Lumenal-facing; that stretch reads ASFTTKLWQLYVTQGFM. The chain crosses the membrane as a helical span at residues 316–336; the sequence is VGCSISLIFVPATTVLPGWFL. At 337–339 the chain is on the cytoplasmic side; that stretch reads KKR. Residues 340–360 form a helical membrane-spanning segment; it reads AVAMGVSLLGTGAGGVVYGLA. Topologically, residues 361-372 are lumenal; the sequence is TNKMLSDFGNTR. Residues 373-393 traverse the membrane as a helical segment; it reads WCLRIIGISCSISVLVAIALL. Over 394–426 the chain is Cytoplasmic; it reads KERNPTPAIGLKSPRAMFEQLKAMFSLKVITKP. The helical transmembrane segment at 427–447 threads the bilayer; that stretch reads FVVLIALWFMFALFAYNMMVF. Topologically, residues 448–504 are lumenal; sequence TLSSYAISKGLSSHDASTLTAILNGSQSIGRPLMGLAGDKFGRANVTIVLTTLLTIY. N-linked (GlcNAc...) asparagine glycans are attached at residues Asn-471 and Asn-492. A helical membrane pass occupies residues 505–525; that stretch reads MFAFWIPAHTFVQLIFFSILV. At 526–549 the chain is on the cytoplasmic side; it reads GSCVGVANVMNTVLIADMVKPEEF. Residues 550 to 570 form a helical membrane-spanning segment; sequence LPAWAFVNYCGAPFLLVCEVI. At 571–584 the chain is on the lumenal side; sequence AQALTVEKDKSNPY. The helical transmembrane segment at 585–605 threads the bilayer; the sequence is LHAQIFCGCCFIAALILISIL. The Cytoplasmic segment spans residues 606 to 673; it reads REYSIRMKLT…FLRMVYPMKV (68 aa). Ser-637 is subject to Phosphoserine.

The protein belongs to the major facilitator superfamily. Monocarboxylate porter (TC 2.A.1.13) family.

It localises to the endoplasmic reticulum membrane. This is an uncharacterized protein from Saccharomyces cerevisiae (strain ATCC 204508 / S288c) (Baker's yeast).